Reading from the N-terminus, the 121-residue chain is ATP synthase epsilon chain (121 aa).

Belongs to the ATPase epsilon chain family. In terms of assembly, F-type ATPases have 2 components, CF(1) - the catalytic core - and CF(0) - the membrane proton channel. CF(1) has five subunits: alpha(3), beta(3), gamma(1), delta(1), epsilon(1). CF(0) has three main subunits: a, b and c.

It localises to the cell membrane. Functionally, produces ATP from ADP in the presence of a proton gradient across the membrane. The chain is ATP synthase epsilon chain (atpC) from Mycobacterium bovis (strain ATCC BAA-935 / AF2122/97).